Consider the following 273-residue polypeptide: 4-hydroxy-tetrahydrodipicolinate reductase (273 aa).

12–17 (GSGGRM) contributes to the NAD(+) binding site. Arg39 lines the NADP(+) pocket. Residues 102–104 (GTT) and 126–129 (AANF) each bind NAD(+). Catalysis depends on His159, which acts as the Proton donor/acceptor. His160 serves as a coordination point for (S)-2,3,4,5-tetrahydrodipicolinate. Lys163 functions as the Proton donor in the catalytic mechanism. A (S)-2,3,4,5-tetrahydrodipicolinate-binding site is contributed by 169-170 (GT).

Belongs to the DapB family. As to quaternary structure, homotetramer.

It is found in the cytoplasm. The catalysed reaction is (S)-2,3,4,5-tetrahydrodipicolinate + NAD(+) + H2O = (2S,4S)-4-hydroxy-2,3,4,5-tetrahydrodipicolinate + NADH + H(+). The enzyme catalyses (S)-2,3,4,5-tetrahydrodipicolinate + NADP(+) + H2O = (2S,4S)-4-hydroxy-2,3,4,5-tetrahydrodipicolinate + NADPH + H(+). It participates in amino-acid biosynthesis; L-lysine biosynthesis via DAP pathway; (S)-tetrahydrodipicolinate from L-aspartate: step 4/4. Functionally, catalyzes the conversion of 4-hydroxy-tetrahydrodipicolinate (HTPA) to tetrahydrodipicolinate. This chain is 4-hydroxy-tetrahydrodipicolinate reductase, found in Serratia proteamaculans (strain 568).